The sequence spans 688 residues: UvrABC system protein B (688 aa).

One can recognise a Helicase ATP-binding domain in the interval 31–188; sequence GRVNAGEPDV…RKFVSMQYQR (158 aa). 44–51 provides a ligand contact to ATP; that stretch reads GATGTGKS. A Beta-hairpin motif is present at residues 97–120; it reads YYDYYQPEAYVPQTDTFIEKDSSV. Residues 434 to 587 form the Helicase C-terminal domain; sequence QIDDLLEQIR…QVAYNTEHGI (154 aa). The disordered stretch occupies residues 607 to 632; the sequence is GEDTKKMLEGRGGGKRSPTPNLRREG. In terms of domain architecture, UVR spans 642–677; sequence ETIISDLNDQMLQAAGELKFELAARLRDELGDLKRE.

Belongs to the UvrB family. Forms a heterotetramer with UvrA during the search for lesions. Interacts with UvrC in an incision complex.

It is found in the cytoplasm. Its function is as follows. The UvrABC repair system catalyzes the recognition and processing of DNA lesions. A damage recognition complex composed of 2 UvrA and 2 UvrB subunits scans DNA for abnormalities. Upon binding of the UvrA(2)B(2) complex to a putative damaged site, the DNA wraps around one UvrB monomer. DNA wrap is dependent on ATP binding by UvrB and probably causes local melting of the DNA helix, facilitating insertion of UvrB beta-hairpin between the DNA strands. Then UvrB probes one DNA strand for the presence of a lesion. If a lesion is found the UvrA subunits dissociate and the UvrB-DNA preincision complex is formed. This complex is subsequently bound by UvrC and the second UvrB is released. If no lesion is found, the DNA wraps around the other UvrB subunit that will check the other stand for damage. The sequence is that of UvrABC system protein B from Clavibacter michiganensis subsp. michiganensis (strain NCPPB 382).